A 113-amino-acid chain; its full sequence is Guanylate cyclase activator 2B (113 aa).

Residues 1–27 (MASRAAAGLLLCGVALVFLVLLQGTQS) form the signal peptide. Positions 28-97 (VYIQYQGFRV…SIFQALRTIA (70 aa)) are excised as a propeptide. 3 disulfide bridges follow: Cys-68-Cys-81, Cys-101-Cys-109, and Cys-104-Cys-112.

Belongs to the guanylin family.

Its subcellular location is the secreted. In terms of biological role, endogenous activator of intestinal guanylate cyclase. It stimulates this enzyme through the same receptor binding region as the heat-stable enterotoxins. May be a potent physiological regulator of intestinal fluid and electrolyte transport. May be an autocrine/paracrine regulator of intestinal salt and water transport. The polypeptide is Guanylate cyclase activator 2B (GUCA2B) (Sus scrofa (Pig)).